Consider the following 90-residue polypeptide: Co-chaperonin GroES (90 aa).

This sequence belongs to the GroES chaperonin family. Heptamer of 7 subunits arranged in a ring. Interacts with the chaperonin GroEL.

It is found in the cytoplasm. Together with the chaperonin GroEL, plays an essential role in assisting protein folding. The GroEL-GroES system forms a nano-cage that allows encapsulation of the non-native substrate proteins and provides a physical environment optimized to promote and accelerate protein folding. GroES binds to the apical surface of the GroEL ring, thereby capping the opening of the GroEL channel. The sequence is that of Co-chaperonin GroES from Thermosipho africanus (strain TCF52B).